The sequence spans 23 residues: Ocellatin-LB2 (23 aa).

Asparagine amide is present on asparagine 23.

In terms of tissue distribution, expressed by the skin glands.

The protein resides in the secreted. In terms of biological role, antibacterial peptide that inhibits the Gram-negative bacterium A.actinomycetemcomitans ATCC 29522 (MIC=210 uM). No activity against the bacteria E.coli ATCC 25922 and S.aureus ATCC 25923, or the fungi C.albicans ATCC 18804 and C.lusitaniae ATCC 56936. Does not show hemolytic activity towards rabbit erythrocytes. The polypeptide is Ocellatin-LB2 (Leptodactylus labyrinthicus (Labyrinth frog)).